The following is a 46-amino-acid chain: Defensin-like protein AX2 (46 aa).

4 disulfides stabilise this stretch: C3–C46, C14–C34, C20–C40, and C24–C42.

In terms of tissue distribution, leaves and flowers.

In terms of biological role, strong inhibiting activity against C.beticola and other filamentous fungi. Little or no effect against bacteria. This Beta vulgaris (Sugar beet) protein is Defensin-like protein AX2.